The chain runs to 515 residues: 2-isopropylmalate synthase (515 aa).

Positions 4–266 (IKFFDTTLRD…ETRLNLQEIK (263 aa)) constitute a Pyruvate carboxyltransferase domain. 4 residues coordinate Mn(2+): D13, H201, H203, and N237. The tract at residues 391–515 (QLSSIQVQYG…RGENEKVATP (125 aa)) is regulatory domain.

It belongs to the alpha-IPM synthase/homocitrate synthase family. LeuA type 1 subfamily. Homodimer. It depends on Mn(2+) as a cofactor.

It localises to the cytoplasm. It carries out the reaction 3-methyl-2-oxobutanoate + acetyl-CoA + H2O = (2S)-2-isopropylmalate + CoA + H(+). Its pathway is amino-acid biosynthesis; L-leucine biosynthesis; L-leucine from 3-methyl-2-oxobutanoate: step 1/4. Functionally, catalyzes the condensation of the acetyl group of acetyl-CoA with 3-methyl-2-oxobutanoate (2-ketoisovalerate) to form 3-carboxy-3-hydroxy-4-methylpentanoate (2-isopropylmalate). The protein is 2-isopropylmalate synthase of Geobacillus kaustophilus (strain HTA426).